The primary structure comprises 383 residues: Protein dyf-4 (383 aa).

An N-terminal signal peptide occupies residues methionine 1–alanine 16. A glycan (N-linked (GlcNAc...) asparagine) is linked at asparagine 64.

As to quaternary structure, interacts with daf-6. As to expression, expressed in sheath and socket glial cells in both the amphid and phasmid ciliated sensory neurons (at protein level).

It localises to the secreted. In terms of biological role, required for the localization of daf-6 to the socket glial channel and the sheath lumen. In association with daf-6, plays a role in dendrite extension and ciliogenesis to ensure the formation of glial channels in amphid and phasmid ciliated sensory neurons. This Caenorhabditis elegans protein is Protein dyf-4.